Consider the following 669-residue polypeptide: Elongation factor G-like protein (669 aa).

Positions 7 to 279 constitute a tr-type G domain; it reads ESLRNVAIVG…VLIKEAPDPS (273 aa). A G1 region spans residues 16-23; that stretch reads GPYGSGKT. A GTP-binding site is contributed by 16 to 23; that stretch reads GPYGSGKT. Residues 59 to 63 form a G2 region; that stretch reads QMSVE. Residues 80-83 are G3; sequence DCPG. GTP is bound by residues 80 to 84 and 134 to 137; these read DCPGS and NKMD. Residues 134–137 form a G4 region; that stretch reads NKMD. A G5 region spans residues 257–259; sequence AAE.

The protein belongs to the TRAFAC class translation factor GTPase superfamily. Classic translation factor GTPase family. EF-G/EF-2 subfamily.

This is Elongation factor G-like protein from Synechocystis sp. (strain ATCC 27184 / PCC 6803 / Kazusa).